A 210-amino-acid chain; its full sequence is Large ribosomal subunit protein uL4 (210 aa).

The span at 47–64 shows a compositional bias: polar residues; it reads SRQGTRSQKSRSEVSGSN. The disordered stretch occupies residues 47 to 83; that stretch reads SRQGTRSQKSRSEVSGSNKKPWRQKGTGRARSGSVKS.

Belongs to the universal ribosomal protein uL4 family. Part of the 50S ribosomal subunit.

Its function is as follows. One of the primary rRNA binding proteins, this protein initially binds near the 5'-end of the 23S rRNA. It is important during the early stages of 50S assembly. It makes multiple contacts with different domains of the 23S rRNA in the assembled 50S subunit and ribosome. In terms of biological role, forms part of the polypeptide exit tunnel. The chain is Large ribosomal subunit protein uL4 from Blochmanniella pennsylvanica (strain BPEN).